The sequence spans 189 residues: Nuclear distribution protein nudE homolog 1 (189 aa).

A coiled-coil region spans residues 4 to 121 (NLDLETAIQI…LRVSKEEATS (118 aa)). The segment covering 114-126 (VSKEEATSGETRR) has biased composition (basic and acidic residues). The tract at residues 114–139 (VSKEEATSGETRRNTRSLPSQNKKMK) is disordered.

Belongs to the nudE family. Self-associates. Interacts with PAC1.

The protein resides in the nucleus. It is found in the cytoplasm. Its subcellular location is the cytoskeleton. Required for nuclear migration to the bud neck during cell division. Targets cytoplasmic dynein to microtubule plus ends thereby promoting dynein-mediated microtubule sliding along the bud cortex and consequently the movement of the mitotic spindle to the bud neck. In Saccharomyces cerevisiae (strain ATCC 204508 / S288c) (Baker's yeast), this protein is Nuclear distribution protein nudE homolog 1 (NDL1).